The primary structure comprises 69 residues: MRAVAIFIVTLLVLECVYFVMSEPDPGQPWQVKAGRPPCYSIPCRKHDECRVGSCSRCNNGLWGDRTCR.

The first 23 residues, 1 to 23 (MRAVAIFIVTLLVLECVYFVMSE), serve as a signal peptide directing secretion.

Expressed in the fat body, hemocytes and salivary glands of partially-fed female ticks. Not expressed in the midgut.

It is found in the secreted. Functionally, has antimicrobial activity against B.cereus (MIC=5.8 ug/ml), B.subtilis (MIC=12.3 ug/ml), S.aureus (MIC=10.4 ug/ml), E.coli Edl 933 (MIC=3.2 ug/ml) and E.coli MG/655 (MIC=4.2 ug/ml). Non-hemolytic. In Ixodes scapularis (Black-legged tick), this protein is Antimicrobial peptide ISAMP.